We begin with the raw amino-acid sequence, 556 residues long: Formate--tetrahydrofolate ligase (556 aa).

65 to 72 provides a ligand contact to ATP; it reads TPAGEGKS.

Belongs to the formate--tetrahydrofolate ligase family.

It carries out the reaction (6S)-5,6,7,8-tetrahydrofolate + formate + ATP = (6R)-10-formyltetrahydrofolate + ADP + phosphate. The protein operates within one-carbon metabolism; tetrahydrofolate interconversion. In Streptococcus thermophilus (strain CNRZ 1066), this protein is Formate--tetrahydrofolate ligase.